Reading from the N-terminus, the 397-residue chain is uncharacterized protein (397 aa).

The segment at 368-391 (TTKPGLHQPTQKRPTQTTSKPYIN) is disordered. The span at 375 to 388 (QPTQKRPTQTTSKP) shows a compositional bias: polar residues.

This is an uncharacterized protein from Acanthamoeba polyphaga mimivirus (APMV).